Reading from the N-terminus, the 668-residue chain is DNA ligase (668 aa).

NAD(+) contacts are provided by residues 34–38, 83–84, and E113; these read DAEYD and SL. K115 functions as the N6-AMP-lysine intermediate in the catalytic mechanism. NAD(+) contacts are provided by R136, E170, K286, and K310. Zn(2+)-binding residues include C404, C407, C422, and C427. Residues 590–668 form the BRCT domain; sequence ESDSYFAGKT…EVKMLEELKK (79 aa).

It belongs to the NAD-dependent DNA ligase family. LigA subfamily. The cofactor is Mg(2+). Mn(2+) serves as cofactor.

It catalyses the reaction NAD(+) + (deoxyribonucleotide)n-3'-hydroxyl + 5'-phospho-(deoxyribonucleotide)m = (deoxyribonucleotide)n+m + AMP + beta-nicotinamide D-nucleotide.. Its function is as follows. DNA ligase that catalyzes the formation of phosphodiester linkages between 5'-phosphoryl and 3'-hydroxyl groups in double-stranded DNA using NAD as a coenzyme and as the energy source for the reaction. It is essential for DNA replication and repair of damaged DNA. The protein is DNA ligase of Bacillus pumilus (strain SAFR-032).